The primary structure comprises 309 residues: Acetylglutamate kinase (309 aa).

Residues 69-70, R91, and N194 each bind substrate; that span reads GG.

It belongs to the acetylglutamate kinase family. ArgB subfamily.

It localises to the cytoplasm. It catalyses the reaction N-acetyl-L-glutamate + ATP = N-acetyl-L-glutamyl 5-phosphate + ADP. Its pathway is amino-acid biosynthesis; L-arginine biosynthesis; N(2)-acetyl-L-ornithine from L-glutamate: step 2/4. Catalyzes the ATP-dependent phosphorylation of N-acetyl-L-glutamate. The chain is Acetylglutamate kinase from Vesicomyosocius okutanii subsp. Calyptogena okutanii (strain HA).